The chain runs to 349 residues: Phenylalanine--tRNA ligase alpha subunit (349 aa).

Residue Glu258 coordinates Mg(2+).

This sequence belongs to the class-II aminoacyl-tRNA synthetase family. Phe-tRNA synthetase alpha subunit type 1 subfamily. As to quaternary structure, tetramer of two alpha and two beta subunits. Mg(2+) is required as a cofactor.

It localises to the cytoplasm. It carries out the reaction tRNA(Phe) + L-phenylalanine + ATP = L-phenylalanyl-tRNA(Phe) + AMP + diphosphate + H(+). The sequence is that of Phenylalanine--tRNA ligase alpha subunit from Rickettsia africae (strain ESF-5).